Reading from the N-terminus, the 348-residue chain is DNA-directed RNA polymerase subunit alpha (348 aa).

The segment at 1–243 (MLIKQGDRLI…DQISVFINFD (243 aa)) is alpha N-terminal domain (alpha-NTD). Residues 260–348 (VNENLFKGID…WLKRKQQNEA (89 aa)) are alpha C-terminal domain (alpha-CTD).

The protein belongs to the RNA polymerase alpha chain family. In terms of assembly, homodimer. The RNAP catalytic core consists of 2 alpha, 1 beta, 1 beta' and 1 omega subunit. When a sigma factor is associated with the core the holoenzyme is formed, which can initiate transcription.

The catalysed reaction is RNA(n) + a ribonucleoside 5'-triphosphate = RNA(n+1) + diphosphate. Functionally, DNA-dependent RNA polymerase catalyzes the transcription of DNA into RNA using the four ribonucleoside triphosphates as substrates. This Oleidesulfovibrio alaskensis (strain ATCC BAA-1058 / DSM 17464 / G20) (Desulfovibrio alaskensis) protein is DNA-directed RNA polymerase subunit alpha.